We begin with the raw amino-acid sequence, 453 residues long: Nuclear and cytoplasmic polyadenylated RNA-binding protein PUB1 (453 aa).

Residues 1 to 67 are disordered; that stretch reads MSENNEEQHQ…PSVVPANAIT (67 aa). Ser2 is modified (N-acetylserine). RRM domains follow at residues 75–152 and 162–240; these read RVLY…WAFQ and FNLF…WAAK. A disordered region spans residues 241–262; that stretch reads RDNNNNNNYQQRRNYGNNNRGG. Residues 244–262 show a composition bias toward low complexity; it reads NNNNNYQQRRNYGNNNRGG. Omega-N-methylarginine is present on Arg260. Positions 260–264 are RNA-binding RGG-box; it reads RGGFR. Residues 341–413 enclose the RRM 3 domain; the sequence is TTAYIGNIPH…RNLRTGWGKE (73 aa). The interval 419 to 453 is disordered; that stretch reads PQQQQQGGQPLIMNDQQQPVMSEQQQQQQQQQQQQ. Over residues 434 to 453 the composition is skewed to low complexity; the sequence is QQQPVMSEQQQQQQQQQQQQ.

As to quaternary structure, interacts with NAB2.

The protein resides in the cytoplasm. The protein localises to the nucleus. It is found in the P-body. Its subcellular location is the stress granule. Its function is as follows. May be associated with hnRNA within the nucleus and remains associated during nucleocytoplasmic mRNA transport, once the proteins are in the cytoplasm, disassembly of PUB1-RNA complexes may occur prior to PAB1 binding and formation of a translationally competent RNP complex. Binds to polyadenylated RNA; prefers to bind poly(rU); binds to T-rich single-stranded DNA. This Saccharomyces cerevisiae (strain ATCC 204508 / S288c) (Baker's yeast) protein is Nuclear and cytoplasmic polyadenylated RNA-binding protein PUB1.